The chain runs to 630 residues: Molybdenum cofactor biosynthesis protein 1 (630 aa).

Positions 61 to 298 (RFNRHHTYLR…SKTYHVPGFK (238 aa)) constitute a Radical SAM core domain. R70 contacts GTP. C77 and C81 together coordinate [4Fe-4S] cluster. Y83 contacts S-adenosyl-L-methionine. Residue C84 coordinates [4Fe-4S] cluster. Residue R120 coordinates GTP. G124 is an S-adenosyl-L-methionine binding site. A GTP-binding site is contributed by T151. S175 lines the S-adenosyl-L-methionine pocket. Position 212 (K212) interacts with GTP. M246 provides a ligand contact to S-adenosyl-L-methionine. Positions 312 and 315 each coordinate [4Fe-4S] cluster. Residue 317-319 (RLR) coordinates GTP. C329 is a binding site for [4Fe-4S] cluster. The segment at 402 to 629 (KEVKNYLLKL…GGKSSSPQIT (228 aa)) is molybdenum cofactor biosynthesis protein C. D599 acts as the For molybdenum cofactor biosynthesis protein C activity in catalysis.

It in the C-terminal section; belongs to the MoaC family. The protein in the N-terminal section; belongs to the radical SAM superfamily. MoaA family. In terms of assembly, isoform mocs1a and isoform mocs1b probably form a heterooligomer. It depends on [4Fe-4S] cluster as a cofactor.

It carries out the reaction GTP + AH2 + S-adenosyl-L-methionine = (8S)-3',8-cyclo-7,8-dihydroguanosine 5'-triphosphate + 5'-deoxyadenosine + L-methionine + A + H(+). The catalysed reaction is (8S)-3',8-cyclo-7,8-dihydroguanosine 5'-triphosphate = cyclic pyranopterin phosphate + diphosphate. The protein operates within cofactor biosynthesis; molybdopterin biosynthesis. Functionally, isoform mocs1a and isoform mocs1b probably form a complex that catalyzes the conversion of 5'-GTP to cyclic pyranopterin monophosphate (cPMP). mocs1a catalyzes the cyclization of GTP to (8S)-3',8-cyclo-7,8-dihydroguanosine 5'-triphosphate and mocs1b catalyzes the subsequent conversion of (8S)-3',8-cyclo-7,8-dihydroguanosine 5'-triphosphate to cPMP. This Dictyostelium discoideum (Social amoeba) protein is Molybdenum cofactor biosynthesis protein 1 (mocs1).